The chain runs to 71 residues: Large ribosomal subunit protein uL29 (71 aa).

It belongs to the universal ribosomal protein uL29 family.

The protein is Large ribosomal subunit protein uL29 of Methanocella arvoryzae (strain DSM 22066 / NBRC 105507 / MRE50).